Here is a 447-residue protein sequence, read N- to C-terminus: N-succinylarginine dihydrolase (447 aa).

Substrate-binding positions include 19 to 28, asparagine 110, and 137 to 138; these read AGLSFGNEAS and HR. Glutamate 174 is an active-site residue. Arginine 212 contacts substrate. Residue histidine 248 is part of the active site. Residues aspartate 250 and asparagine 359 each contribute to the substrate site. Cysteine 365 (nucleophile) is an active-site residue.

It belongs to the succinylarginine dihydrolase family. As to quaternary structure, homodimer.

The catalysed reaction is N(2)-succinyl-L-arginine + 2 H2O + 2 H(+) = N(2)-succinyl-L-ornithine + 2 NH4(+) + CO2. Its pathway is amino-acid degradation; L-arginine degradation via AST pathway; L-glutamate and succinate from L-arginine: step 2/5. In terms of biological role, catalyzes the hydrolysis of N(2)-succinylarginine into N(2)-succinylornithine, ammonia and CO(2). This chain is N-succinylarginine dihydrolase, found in Salmonella paratyphi B (strain ATCC BAA-1250 / SPB7).